A 490-amino-acid polypeptide reads, in one-letter code: Fumitremorgin C monooxygenase (490 aa).

A helical membrane pass occupies residues 12-32; that stretch reads LGVVGASLIVILGIILLFPLG. Cysteine 442 contributes to the heme binding site.

It belongs to the cytochrome P450 family. Requires heme as cofactor.

It localises to the membrane. The enzyme catalyses fumitremorgin C + 2 reduced [NADPH--hemoprotein reductase] + 2 O2 = 12alpha,13alpha-dihydroxyfumitremorgin C + 2 oxidized [NADPH--hemoprotein reductase] + 2 H2O + 2 H(+). It participates in mycotoxin biosynthesis. Its function is as follows. Cytochrome P450 monooxygenase; part of the gene cluster that mediates the biosynthesis of fumitremorgins, indole alkaloids that carry not only intriguing chemical structures, but also interesting biological and pharmacological activities. The biosynthesis of fumitremorgin-type alkaloids begins by condensation of the two amino acids L-tryptophan and L-proline to brevianamide F, catalyzed by the non-ribosomal peptide synthetase ftmA. Brevianamide F is then prenylated by the prenyltransferase ftmPT1/ftmB in the presence of dimethylallyl diphosphate, resulting in the formation of tryprostatin B. The three cytochrome P450 monooxygenases, ftmP450-1/ftmC, ftmP450-2/ftmE and ftmP450-3/FtmG, are responsible for the conversion of tryprostatin B to 6-hydroxytryprostatin B, tryprostatin A to fumitremorgin C and fumitremorgin C to 12,13-dihydroxyfumitremorgin C, respectively. The putative methyltransferase ftmMT/ftmD is expected for the conversion of 6-hydroxytryprostatin B to tryprostatin A. FtmPT2/FtmH catalyzes the prenylation of 12,13-dihydroxyfumitre-morgin C in the presence of dimethylallyl diphosphate, resulting in the formation of fumitremorgin B. Fumitremorgin B is further converted to verruculogen by ftmOx1/ftmF via the insertion of an endoperoxide bond between the two prenyl moieties. In some fungal species, verruculogen is further converted to fumitremorgin A, but the enzymes involved in this step have not been identified yet. The sequence is that of Fumitremorgin C monooxygenase from Aspergillus fumigatus (strain ATCC MYA-4609 / CBS 101355 / FGSC A1100 / Af293) (Neosartorya fumigata).